A 1058-amino-acid polypeptide reads, in one-letter code: Protein argonaute MEL1 (1058 aa).

Gly residues-rich tracts occupy residues methionine 1–glycine 12 and aspartate 24–alanine 37. Disordered regions lie at residues methionine 1–proline 77 and arginine 115–threonine 147. Over residues tryptophan 48–proline 70 the composition is skewed to pro residues. Residues histidine 121–threonine 147 show a composition bias toward low complexity. A PAZ domain is found at threonine 407–glutamate 520. Positions leucine 696–glutamate 1016 constitute a Piwi domain.

It belongs to the argonaute family. Ago subfamily.

The protein resides in the nucleus. It localises to the nucleolus. Essential for the progression of premeiotic mitosis and meiosis during sporogenesis. Regulates the cell division of premeiotic germ cells, the proper modification of meiotic chromosomes, and the faithful progression of meiosis, probably via small RNA-mediated gene silencing. May be involved in histone H3 'Lys-9' demethylation in the pericentromeric region. The polypeptide is Protein argonaute MEL1 (MEL1) (Oryza sativa subsp. japonica (Rice)).